The chain runs to 185 residues: Ribosome-recycling factor (185 aa).

The disordered stretch occupies residues 137 to 158 (NQVKKLEKDKEISEDESKKAQE). Residues 140–158 (KKLEKDKEISEDESKKAQE) show a composition bias toward basic and acidic residues.

Belongs to the RRF family.

The protein resides in the cytoplasm. In terms of biological role, responsible for the release of ribosomes from messenger RNA at the termination of protein biosynthesis. May increase the efficiency of translation by recycling ribosomes from one round of translation to another. This Helicobacter pylori (strain P12) protein is Ribosome-recycling factor.